Consider the following 331-residue polypeptide: GATA transcription factor 12 (331 aa).

Disordered regions lie at residues 30–49 (ENDV…SSNF) and 105–138 (SGFK…SVPA). The segment covering 34 to 47 (VADSTTTTTITDSS) has biased composition (low complexity). The segment covering 116–134 (DTGSPENPNSSSPIFTTDV) has biased composition (polar residues). Positions 139 to 146 (KARSKRSR) match the Nuclear localization signal motif. The interval 174 to 218 (SSQQHLSPPTSPPLLMAPLGKKQAVDGGHRRKKDVSSPESGGAEE) is disordered. The segment at 215–269 (GAEERRCLHCATDKTPQWRTGPMGPKTLCNACGVRYKSGRLVPEYRPAASPTFVL) adopts a GATA-type zinc-finger fold.

The protein belongs to the type IV zinc-finger family. Class A subfamily. As to expression, expressed in the vascular cylinder of roots. Expressed in the differentiation zone of the root stele.

Its subcellular location is the nucleus. Its function is as follows. Transcriptional activator that specifically binds 5'-GATA-3' or 5'-GAT-3' motifs within gene promoters. May be involved in the regulation of some light-responsive genes. Transcription activator involved in xylem formation. Functions upstream of NAC030/VND7, a master switch of xylem vessel differentiation. The protein is GATA transcription factor 12 of Arabidopsis thaliana (Mouse-ear cress).